The sequence spans 289 residues: Dehydrodolichyl diphosphate synthase 4 (289 aa).

A helical transmembrane segment spans residues L2–P22.

It belongs to the UPP synthase family. The cofactor is Mg(2+).

It is found in the endoplasmic reticulum membrane. It functions in the pathway protein modification; protein glycosylation. In terms of biological role, catalyzes cis-prenyl chain elongation to produce the polyprenyl backbone of dolichol, a glycosyl carrier-lipid required for the biosynthesis of several classes of glycoprotein. This is Dehydrodolichyl diphosphate synthase 4 from Arabidopsis thaliana (Mouse-ear cress).